The sequence spans 204 residues: Thiamine-phosphate synthase (204 aa).

4-amino-2-methyl-5-(diphosphooxymethyl)pyrimidine contacts are provided by residues 35-39 and Asn-67; that span reads QVREK. The Mg(2+) site is built by Asp-68 and Asp-87. Position 106 (Ser-106) interacts with 4-amino-2-methyl-5-(diphosphooxymethyl)pyrimidine. 132–134 serves as a coordination point for 2-[(2R,5Z)-2-carboxy-4-methylthiazol-5(2H)-ylidene]ethyl phosphate; that stretch reads TPT. Lys-135 is a binding site for 4-amino-2-methyl-5-(diphosphooxymethyl)pyrimidine. 2-[(2R,5Z)-2-carboxy-4-methylthiazol-5(2H)-ylidene]ethyl phosphate contacts are provided by residues Gly-163 and 183-184; that span reads VS.

The protein belongs to the thiamine-phosphate synthase family. Mg(2+) is required as a cofactor.

It catalyses the reaction 2-[(2R,5Z)-2-carboxy-4-methylthiazol-5(2H)-ylidene]ethyl phosphate + 4-amino-2-methyl-5-(diphosphooxymethyl)pyrimidine + 2 H(+) = thiamine phosphate + CO2 + diphosphate. The catalysed reaction is 2-(2-carboxy-4-methylthiazol-5-yl)ethyl phosphate + 4-amino-2-methyl-5-(diphosphooxymethyl)pyrimidine + 2 H(+) = thiamine phosphate + CO2 + diphosphate. The enzyme catalyses 4-methyl-5-(2-phosphooxyethyl)-thiazole + 4-amino-2-methyl-5-(diphosphooxymethyl)pyrimidine + H(+) = thiamine phosphate + diphosphate. Its pathway is cofactor biosynthesis; thiamine diphosphate biosynthesis; thiamine phosphate from 4-amino-2-methyl-5-diphosphomethylpyrimidine and 4-methyl-5-(2-phosphoethyl)-thiazole: step 1/1. Its function is as follows. Condenses 4-methyl-5-(beta-hydroxyethyl)thiazole monophosphate (THZ-P) and 2-methyl-4-amino-5-hydroxymethyl pyrimidine pyrophosphate (HMP-PP) to form thiamine monophosphate (TMP). The sequence is that of Thiamine-phosphate synthase from Vibrio parahaemolyticus serotype O3:K6 (strain RIMD 2210633).